The sequence spans 598 residues: Protein unc-93 homolog B1 (598 aa).

Residues 1–36 (MEVEPPLYPVAGAAGPQGDEDRHGVPDGPEAPLDEL) are disordered. 5 consecutive transmembrane segments (helical) span residues 64-84 (VLAA…LLQM), 110-130 (KMLM…PVLI), 132-152 (FFGT…FVST), 160-180 (TLVP…ASMG), and 223-243 (IFYS…IYFL). 2 N-linked (GlcNAc...) asparagine glycosylation sites follow: asparagine 251 and asparagine 272. A run of 5 helical transmembrane segments spans residues 285–305 (LIVV…MVLG), 343–363 (LVPF…GFAL), 378–398 (LLIA…LGLW), 403–423 (VPLV…FFWA), and 428–448 (VLQH…GSAL). N-linked (GlcNAc...) asparagine glycosylation is present at asparagine 449. 2 helical membrane-spanning segments follow: residues 469-489 (FIFT…YLGS) and 495-515 (AKLA…LWME). The segment at 524–598 (PRQPRIPKPQ…ALGGDGPEEQ (75 aa)) is disordered. Positions 544–554 (EDNSDESDMEG) are enriched in acidic residues. A phosphoserine mark is found at serine 547 and serine 550.

Belongs to the unc-93 family. Interacts with TLR3, TLR5, TLR7, TLR8, TLR9 and TLR13 (probably via transmembrane domain). N-glycosylated.

The protein resides in the endoplasmic reticulum membrane. Its subcellular location is the endosome. It localises to the lysosome. It is found in the cytoplasmic vesicle. The protein localises to the phagosome. Its function is as follows. Plays an important role in innate and adaptive immunity by regulating nucleotide-sensing Toll-like receptor (TLR) signaling. Required for the transport of a subset of TLRs (including TLR3, TLR7 and TLR9) from the endoplasmic reticulum to endolysosomes where they can engage pathogen nucleotides and activate signaling cascades. May play a role in autoreactive B-cells removal. The chain is Protein unc-93 homolog B1 from Mus musculus (Mouse).